Reading from the N-terminus, the 390-residue chain is Chalcone synthase (390 aa).

C164 is an active-site residue.

The protein belongs to the thiolase-like superfamily. Chalcone/stilbene synthases family.

It catalyses the reaction (E)-4-coumaroyl-CoA + 3 malonyl-CoA + 3 H(+) = 2',4,4',6'-tetrahydroxychalcone + 3 CO2 + 4 CoA. It participates in secondary metabolite biosynthesis; flavonoid biosynthesis. Functionally, the primary product of this enzyme is 4,2',4',6'-tetrahydroxychalcone (also termed naringenin-chalcone or chalcone) which undergoes enzyme-catalyzed or spontaneous isomerization into naringenin. This is Chalcone synthase from Hypericum androsaemum (Tutsan).